A 446-amino-acid chain; its full sequence is Argininosuccinate synthase (446 aa).

ATP is bound by residues Ala-17–Ser-25 and Ala-43. Residue Tyr-99 coordinates L-citrulline. The ATP site is built by Gly-129 and Thr-131. L-aspartate-binding residues include Thr-131, Asn-135, and Asp-136. Asn-135 is an L-citrulline binding site. An ATP-binding site is contributed by Asp-136. L-citrulline is bound by residues Arg-139 and Ser-192. Asp-194 contributes to the ATP binding site. Residues Thr-201, Glu-203, and Glu-280 each contribute to the L-citrulline site.

Belongs to the argininosuccinate synthase family. Type 2 subfamily. In terms of assembly, homotetramer.

Its subcellular location is the cytoplasm. It catalyses the reaction L-citrulline + L-aspartate + ATP = 2-(N(omega)-L-arginino)succinate + AMP + diphosphate + H(+). It functions in the pathway amino-acid biosynthesis; L-arginine biosynthesis; L-arginine from L-ornithine and carbamoyl phosphate: step 2/3. The chain is Argininosuccinate synthase from Variovorax paradoxus (strain S110).